Reading from the N-terminus, the 268-residue chain is MLFDIFRAVILGVVEGVTEFLPVSSTGHLLLVGRFFNLGEDSFWKSFAVLIQLGAILAILSIYFAKLWRIALGMFSDPAARRFVIGVLVAFLPAAMIGAVAGSYIKLYLFNPWVVCFSLIVGGAILLWVDQLDLNPQQHDATAFPLPMYFYIGCAQCLAMIPGVSRSGASIVAAMLFGADKRSAAEFSFFLAIPTMVGAFVYDFYKNRGEMTTDHLTIVAIGFVVSFITAVIVVKTFLGYVTRHGFELFAWWRVIVGTLGLIALAMGR.

Transmembrane regions (helical) follow at residues 47-67 (FAVL…FAKL), 83-103 (FVIG…VAGS), 109-129 (LFNP…LLWV), 144-164 (FPLP…IPGV), 184-204 (AAEF…VYDF), 218-238 (IVAI…KTFL), and 246-266 (FELF…ALAM).

Belongs to the UppP family.

The protein resides in the cell inner membrane. The catalysed reaction is di-trans,octa-cis-undecaprenyl diphosphate + H2O = di-trans,octa-cis-undecaprenyl phosphate + phosphate + H(+). Catalyzes the dephosphorylation of undecaprenyl diphosphate (UPP). Confers resistance to bacitracin. The polypeptide is Undecaprenyl-diphosphatase (Rhodopseudomonas palustris (strain BisB5)).